A 507-amino-acid chain; its full sequence is MTIKFASLILAGLGLGSGALGSVTFRREESSWTNDSLTSVFAQQAKGLFLPRTVISFQGQEWFENVTERWDIYAPPTFKVSVSPSTEKDVESAVKLAAKFKIPFLATGGRHGYGTTLGKLKNGLSIDLSLLNQFSIDSKAATITVGPGVRFRDIFTPLYEAGFQVPTGTCSCVGMIGATLGGGIGRLNGLDGLMIDALESARVVTADGRTLTVSEKENKDLFWGMRGAGQNFGVVVSATYKLKPLYAAGVWTNVDLIFSPDKNATYFDVVTSMEVPPQLTIASVVTYNATLDEPQLIATLTWTGPRDEALAAMKPILDVGPRHSEVTEATYATLPRVATFGTTDAVCAPGQIYDIYGVGLRRLDSAAWRSTFSKMARFYAAEPAGRASSILYETWPVQATVAVPDDATAYPWRDASTYVLIQMRWDRPGSPLERAADRLGAELRSDLSATGGYQGAGPAVYVNYAHGDERLEDIYGARKLPRLAKLKKQYDPGNVFRFHHALPTKYP.

The signal sequence occupies residues 1 to 21 (MTIKFASLILAGLGLGSGALG). Asparagine 34 and asparagine 65 each carry an N-linked (GlcNAc...) asparagine glycan. Residues 73-245 (YAPPTFKVSV…VSATYKLKPL (173 aa)) enclose the FAD-binding PCMH-type domain. 2 N-linked (GlcNAc...) asparagine glycosylation sites follow: asparagine 263 and asparagine 288.

This sequence belongs to the oxygen-dependent FAD-linked oxidoreductase family. FAD serves as cofactor.

It catalyses the reaction dihydropyriculol + A = pyriculol + AH2. The enzyme catalyses dihydropyriculariol + A = pyriculariol + AH2. It functions in the pathway polyketide biosynthesis. In terms of biological role, FAD-linked oxidoreductase; part of the gene cluster that mediates the biosynthesis of pyriculol and pyriculariol, two heptaketides that induce lesion formation upon application on rice leaves but are dispensable for pathogenicity. The highly reducing polyketide synthase synthesizes the heptaketide backbone of pyriculol and pyriculariol. Pyriculol and pyriculariol contain several hydroxyl moieties and double bonds, so it can be assumed that several reduction steps occur during biosynthesis. These reactions could be executed by PKS19 itself or partly by the tailoring enzymes OXR1, OXR2, RED1, RED2 or RED3, identified within the cluster. The FAD-linked oxidoreductase OXR1 is the only tailoring enzyme for which the function has been determined yet, and is involved in the oxidation of dihydropyriculol and dihydropyriculariol into pyriculol and pyriculariol, respectively. The sequence is that of FAD-linked oxidoreductase OXR1 from Pyricularia oryzae (strain 70-15 / ATCC MYA-4617 / FGSC 8958) (Rice blast fungus).